The primary structure comprises 427 residues: Glutamate-1-semialdehyde 2,1-aminomutase (427 aa).

Lys265 carries the N6-(pyridoxal phosphate)lysine modification.

Belongs to the class-III pyridoxal-phosphate-dependent aminotransferase family. HemL subfamily. In terms of assembly, homodimer. Pyridoxal 5'-phosphate is required as a cofactor.

The protein localises to the cytoplasm. The enzyme catalyses (S)-4-amino-5-oxopentanoate = 5-aminolevulinate. It functions in the pathway porphyrin-containing compound metabolism; protoporphyrin-IX biosynthesis; 5-aminolevulinate from L-glutamyl-tRNA(Glu): step 2/2. The protein is Glutamate-1-semialdehyde 2,1-aminomutase of Pseudomonas entomophila (strain L48).